The primary structure comprises 164 residues: Protein PPLZ02 (164 aa).

Residues 7-64 (RYRGFRQRHWGSWVSEIRHSILKTRIWQGTFESAEDAARAYDEAARLMCGTRARTNFP) constitute a DNA-binding region (AP2/ERF).

Its subcellular location is the nucleus. Its function is as follows. Essential for all lupin cells independent of the respective tissue. This chain is Protein PPLZ02 (PPLZ02), found in Lupinus polyphyllus (Large-leaved lupine).